The following is a 440-amino-acid chain: MQLTTSQQMQTNFLTTNKHHLLKYTNGLIWCWWLFVISLVLASSTFRGFFLGTINIVNFVFWILALIFGVAVAFINGVLSSELKENSVFQEEQKRFFLGFFFPQMAFCNALWLKLKLSYLNSERENLLEKIKQKLKKLTLSVFVVWGIYCVLATSIYLPNALRILNIYQIPNLIALINNRLSEILPDGNRYFLGHSSFAFHYYEIVSRIPFLVFFIIPTITLITLGCYLFAYLRFINSNKLRKPLSTLSIVIMLTDVVGIIQWIIIDILLIWLNVPFVIFVIFWVIKLVLPLAMIGTFVSSLTIYKKVTSKEWLAIKEEQINLTTMNININMGEQSSKNMNSFENHESNERNSLQIYQQHSSMMSETKRKQSSLSYDARILLPKSPYNTKKTLFLIIFFSIISLILATIGSVFISFAIVQISIPFYVIGGVIWFFTFISL.

Helical transmembrane passes span 26–46 (NGLIWCWWLFVISLVLASSTF), 59–79 (FVFWILALIFGVAVAFINGVL), 96–116 (FFLGFFFPQMAFCNALWLKLK), 138–158 (LTLSVFVVWGIYCVLATSIYL), 211–231 (FLVFFIIPTITLITLGCYLFA), 241–261 (LRKPLSTLSIVIMLTDVVGII), 263–283 (WIIIDILLIWLNVPFVIFVIF), 284–304 (WVIKLVLPLAMIGTFVSSLTI), 394–414 (FLIIFFSIISLILATIGSVFI), and 418–438 (IVQISIPFYVIGGVIWFFTFI).

It to M.pneumoniae MPN_087.

Its subcellular location is the cell membrane. This is an uncharacterized protein from Mycoplasma pneumoniae (strain ATCC 29342 / M129 / Subtype 1) (Mycoplasmoides pneumoniae).